The chain runs to 142 residues: Nitrogen fixation protein NifU 2 (142 aa).

Residues 1 to 36 (MKDLFDESLTLDTGSAAPGTAPGRPRRRQPAGGKAP) are disordered. The span at 14 to 23 (GSAAPGTAPG) shows a compositional bias: low complexity.

It belongs to the NifU family.

Functionally, may be involved in the formation or repair of [Fe-S] clusters present in iron-sulfur proteins. In Rhodobacter capsulatus (Rhodopseudomonas capsulata), this protein is Nitrogen fixation protein NifU 2 (nifU2).